Consider the following 161-residue polypeptide: Phenolic acid decarboxylase PadC (161 aa).

Residues Tyr11 and Tyr13 each coordinate substrate. The active-site Proton donor is Tyr19. Arg41 provides a ligand contact to substrate. The Proton acceptor role is filled by Glu64.

This sequence belongs to the PadC family. In terms of assembly, homodimer.

The enzyme catalyses (E)-4-coumarate + H(+) = 4-vinylphenol + CO2. The catalysed reaction is (E)-cinnamate + H(+) = styrene + CO2. It catalyses the reaction (E)-ferulate + H(+) = 2-methoxy-4-vinylphenol + CO2. In terms of biological role, involved in the decarboxylation and detoxification of phenolic derivatives. It is able to catalyze the decarboxylation of ferulic, p-coumaric and caffeic acids. The protein is Phenolic acid decarboxylase PadC (padC) of Bacillus subtilis (strain 168).